A 264-amino-acid chain; its full sequence is O-methyltransferase resE (264 aa).

Residues Gln97 and His142 each coordinate S-adenosyl-L-methionine.

Belongs to the methyltransferase superfamily.

It catalyses the reaction desmethylrestrictinol + S-adenosyl-L-methionine = restrictinol + S-adenosyl-L-homocysteine + H(+). It participates in antifungal biosynthesis. In terms of biological role, O-methyltransferase; part of the gene cluster that mediates the biosynthesis of the tetrahydropyranyl antifungal agent restricticin that acts as an inhibitor of CYP51 and blocks the ergosterol biosynthesis. Within the pathway, resE uses S-adenosylmethionine to methylate position C4 of desmethylrestrictinol to produce restrictinol. The highly reducing polyketide synthase resH, the short chain dehydrogenase resG, the cyclase resF, the FAD-dependent monooxygenase resA and the enoylreductase resD are required to generate the first stable intermediate desmethylrestrictinol. ResH with resD biosynthesize the first polyketide chain intermediate that is reduced by resG, followed by epoxidation by resA before 6-endo cyclization via epoxide opening by resF leads to desmethylrestrictinol. The methyltransferase resE then catalyzes the C4 O-methylation of desmethylrestrictinol to produce restrictinol, and the nonribosomal peptide synthetase resC catalyzes the C3 esterification of restrictinol with glycine that leads to restricticin. In Aspergillus sclerotiorum, this protein is O-methyltransferase resE.